The sequence spans 220 residues: Probable septum site-determining protein MinC (220 aa).

Belongs to the MinC family. In terms of assembly, interacts with MinD and FtsZ.

Cell division inhibitor that blocks the formation of polar Z ring septums. Rapidly oscillates between the poles of the cell to destabilize FtsZ filaments that have formed before they mature into polar Z rings. Prevents FtsZ polymerization. The polypeptide is Probable septum site-determining protein MinC (Vibrio vulnificus (strain CMCP6)).